Reading from the N-terminus, the 1232-residue chain is DNA-directed RNA polymerase subunit beta (1232 aa).

The interval 1170–1232 is disordered; it reads SVDEDADELE…LDLDDFGDEH (63 aa). Over residues 1171-1180 the composition is skewed to acidic residues; the sequence is VDEDADELEV. Over residues 1189–1198 the composition is skewed to basic and acidic residues; the sequence is PEEKEEKEKE. The span at 1199–1232 shows a compositional bias: acidic residues; it reads DSDEYDDLREEDVEPDLEELSLDDLDLDDFGDEH.

This sequence belongs to the RNA polymerase beta chain family. As to quaternary structure, the RNAP catalytic core consists of 2 alpha, 1 beta, 1 beta' and 1 omega subunit. When a sigma factor is associated with the core the holoenzyme is formed, which can initiate transcription.

It carries out the reaction RNA(n) + a ribonucleoside 5'-triphosphate = RNA(n+1) + diphosphate. Functionally, DNA-dependent RNA polymerase catalyzes the transcription of DNA into RNA using the four ribonucleoside triphosphates as substrates. The chain is DNA-directed RNA polymerase subunit beta from Clostridium botulinum (strain Kyoto / Type A2).